The primary structure comprises 255 residues: Hydroxyacylglutathione hydrolase (255 aa).

Zn(2+) is bound by residues histidine 53, histidine 55, aspartate 57, histidine 58, histidine 111, aspartate 128, and histidine 166.

It belongs to the metallo-beta-lactamase superfamily. Glyoxalase II family. As to quaternary structure, monomer. Zn(2+) is required as a cofactor.

It carries out the reaction an S-(2-hydroxyacyl)glutathione + H2O = a 2-hydroxy carboxylate + glutathione + H(+). Its pathway is secondary metabolite metabolism; methylglyoxal degradation; (R)-lactate from methylglyoxal: step 2/2. In terms of biological role, thiolesterase that catalyzes the hydrolysis of S-D-lactoyl-glutathione to form glutathione and D-lactic acid. This Nitrosomonas eutropha (strain DSM 101675 / C91 / Nm57) protein is Hydroxyacylglutathione hydrolase.